The chain runs to 1360 residues: Activating molecule in BECN1-regulated autophagy protein 1B (1360 aa).

WD repeat units follow at residues 50-89, 92-132, and 134-174; these read DNPR…CLHS, GHRR…ESWF, and ESNV…AVVK. The span at 249-258 shows a compositional bias: polar residues; sequence RSSGAQANDQ. Disordered stretches follow at residues 249–277, 315–364, 412–490, 514–573, 587–616, 664–688, and 754–796; these read RSSG…FQYP, PTGL…NSAH, GVET…QRNN, ELER…RCRS, WERS…EDPG, PTVS…NPDE, and TLSN…MPRN. The segment covering 319-333 has biased composition (low complexity); it reads QPSDSTQPQTQSGPS. Polar residues predominate over residues 350–361; that stretch reads AFSSVFSGTAGN. Over residues 428–437 the composition is skewed to low complexity; sequence SSSSMDLLSL. Polar residues-rich tracts occupy residues 443–454 and 473–490; these read GSSSSPIYTSAT and DGTS…QRNN. Over residues 590-607 the composition is skewed to low complexity; that stretch reads SGQTSSSSSSQEGPSWPL. The segment covering 754–768 has biased composition (polar residues); that stretch reads TLSNSQADSQSNNPS. Over residues 775-784 the composition is skewed to acidic residues; sequence SDGDYEDIEE. 2 consecutive short sequence motifs (TQT motif) follow at residues 1109–1111 and 1121–1123; these read TQT. Disordered stretches follow at residues 1120 to 1142 and 1241 to 1360; these read ETQT…TSRH and SQTS…LYGR. Composition is skewed to polar residues over residues 1129 to 1142 and 1241 to 1252; these read SAST…TSRH and SQTSVRTAQGGN. Residues 1278 to 1288 show a composition bias toward low complexity; it reads APGPSGSSGAP. Positions 1311 to 1321 are enriched in basic and acidic residues; the sequence is FGDRQPDDVQR. Residues 1329–1347 are compositionally biased toward low complexity; that stretch reads NMSNHSNNNNNDHSNSYSE. The segment covering 1348–1360 has biased composition (basic and acidic residues); sequence SRSRDYPDDLYGR.

Belongs to the WD repeat AMBRA1 family. In terms of assembly, component of the DCX(AMBRA1) E3 ubiquitin ligase complex.

Its subcellular location is the endoplasmic reticulum. It is found in the cytoplasm. The protein localises to the cytoskeleton. The protein resides in the cytoplasmic vesicle. It localises to the autophagosome. Its subcellular location is the mitochondrion. It is found in the cytosol. The protein localises to the nucleus. The protein resides in the cell junction. It localises to the focal adhesion. It functions in the pathway protein modification; protein ubiquitination. Functionally, substrate-recognition component of a DCX (DDB1-CUL4-X-box) E3 ubiquitin-protein ligase complex involved in cell cycle control and autophagy. The DCX(AMBRA1) complex specifically mediates the polyubiquitination of target proteins. Acts as an upstream master regulator of the transition from G1 to S cell phase: ambra1b specifically recognizes and binds phosphorylated cyclin-D (ccnd1, ccnd2 and ccnd3), leading to cyclin-D ubiquitination by the DCX(AMBRA1) complex and subsequent degradation. Acts as a regulator of Cul5-RING (CRL5) E3 ubiquitin-protein ligase complexes by mediating ubiquitination and degradation of Elongin-C (eloc) component of CRL5 complexes. Acts as a key regulator of autophagy by modulating the BECN1-PIK3C3 complex: controls protein turnover during neuronal development, and regulates normal cell survival and proliferation. In normal conditions, ambra1b is tethered to the cytoskeleton via interaction with dyneins light chains. Upon autophagy induction, ambra1b is released from the cytoskeletal docking site to induce autophagosome nucleation by mediating ubiquitination of proteins involved in autophagy. Also acts as an activator of mitophagy. Required for skeletal muscle development. The sequence is that of Activating molecule in BECN1-regulated autophagy protein 1B from Danio rerio (Zebrafish).